The following is a 193-amino-acid chain: Potassium-transporting ATPase KdpC subunit (193 aa).

Residues 7 to 27 form a helical membrane-spanning segment; it reads PLVVLFVVLTAVTGLAYPAVM.

The protein belongs to the KdpC family. As to quaternary structure, the system is composed of three essential subunits: KdpA, KdpB and KdpC.

It is found in the cell inner membrane. Part of the high-affinity ATP-driven potassium transport (or Kdp) system, which catalyzes the hydrolysis of ATP coupled with the electrogenic transport of potassium into the cytoplasm. This subunit acts as a catalytic chaperone that increases the ATP-binding affinity of the ATP-hydrolyzing subunit KdpB by the formation of a transient KdpB/KdpC/ATP ternary complex. The sequence is that of Potassium-transporting ATPase KdpC subunit from Burkholderia orbicola (strain MC0-3).